Here is a 682-residue protein sequence, read N- to C-terminus: Probable xyloglucan glycosyltransferase 6 (682 aa).

Helical transmembrane passes span 109–129 (LIKG…AAYF) and 173–193 (IVLF…CFWI). Asp-260 is a catalytic residue. Substrate is bound by residues Asp-319 and Asp-321. Asp-413 is an active-site residue. The next 2 membrane-spanning stretches (helical) occupy residues 491–511 (LILP…TMFF) and 516–536 (LPSW…IIPA). The residue at position 608 (Ser-608) is a Phosphoserine. The next 2 helical transmembrane spans lie at 632–651 (LYRT…VRSL) and 657–677 (IHFY…LDLI).

Belongs to the glycosyltransferase 2 family. Plant cellulose synthase-like C subfamily. Homodimer. As to expression, mainly expressed in flowers and seeds, and, to a lower extent, in seedlings, roots, leaves and stems.

The protein localises to the golgi apparatus membrane. Probable beta-1,4-glucan synthase rather involved in the synthesis of the xyloglucan backbone than cellulose. Seems to work simultaneously with xyloglucan 6-xylosyltransferase. Xyloglucan is a noncellulosic polysaccharides of plant cell wall and consists of a glucan backbone substituted by xylose, galactose and fucose. This chain is Probable xyloglucan glycosyltransferase 6, found in Arabidopsis thaliana (Mouse-ear cress).